We begin with the raw amino-acid sequence, 229 residues long: Peptidase E (229 aa).

Active-site charge relay system residues include Ser120, Asp135, and His157.

It belongs to the peptidase S51 family.

It is found in the cytoplasm. The catalysed reaction is Dipeptidase E catalyzes the hydrolysis of dipeptides Asp-|-Xaa. It does not act on peptides with N-terminal Glu, Asn or Gln, nor does it cleave isoaspartyl peptides.. Its function is as follows. Hydrolyzes dipeptides containing N-terminal aspartate residues. May play a role in allowing the cell to use peptide aspartate to spare carbon otherwise required for the synthesis of the aspartate family of amino acids. This chain is Peptidase E, found in Shigella boydii serotype 18 (strain CDC 3083-94 / BS512).